Consider the following 234-residue polypeptide: Nuclear transcription factor Y subunit B-6 (234 aa).

Disordered regions lie at residues 1-21 and 35-55; these read MERGGFHGYRKLSVNNTTPSP and MRPPEFNQPNKTSNGGEEECT. A DNA-binding region spans residues 63–69; it reads MPIANVI. The tract at residues 90 to 101 is subunit association domain (SAD); sequence IQECVSEYISFI. Positions 206–234 are disordered; the sequence is NEPNSKMSGSSSGASGARVEVFPTQQHKY. Over residues 213 to 222 the composition is skewed to low complexity; sequence SGSSSGASGA.

This sequence belongs to the NFYB/HAP3 subunit family. As to quaternary structure, heterotrimeric transcription factor composed of three components, NF-YA, NF-YB and NF-YC. NF-YB and NF-YC must interact and dimerize for NF-YA association and DNA binding. Interacts with PRN1. Binds directly with DPB3-1. As to expression, expressed in roots, flowers and developing siliques. Present in etiolated seedlings.

The protein localises to the nucleus. Component of the NF-Y/HAP transcription factor complex. The NF-Y complex stimulates the transcription of various genes by recognizing and binding to a CCAAT motif in promoters. Plays a role in the regulation of the embryogenesis. Involved in the abscisic acid (ABA) signaling pathway. This is Nuclear transcription factor Y subunit B-6 from Arabidopsis thaliana (Mouse-ear cress).